The chain runs to 1620 residues: Putative zinc carboxypeptidase (1620 aa).

The Extracellular portion of the chain corresponds to 1-1367 (MLFKNEDSGN…SYDFLYFDEN (1367 aa)). N-linked (GlcNAc...) asparagine glycosylation is present at Asn19. The disordered stretch occupies residues 32–74 (RNDNKNNDNEDNKQDDEEKNDEDDNKSNLLLEENEENKRQGDK). Positions 33–43 (NDNKNNDNEDN) are enriched in basic and acidic residues. The segment covering 44 to 55 (KQDDEEKNDEDD) has biased composition (acidic residues). 2 N-linked (GlcNAc...) asparagine glycosylation sites follow: Asn56 and Asn102. Positions 309-328 (GNHYDAHESTNTYDEEKTRE) are disordered. N-linked (GlcNAc...) asparagine glycosylation is found at Asn354, Asn487, Asn508, Asn529, Asn550, Asn571, Asn589, Asn687, Asn802, and Asn1010. Residues 497–559 (VNNLDSTVNY…NSTGNNINNI (63 aa)) are possible malaria epitope. One can recognise a Peptidase M14 domain in the interval 1004–1261 (GENKKNNGTK…FYVQNYFEGY (258 aa)). Residues His1059 and Glu1062 each coordinate Zn(2+). N-linked (GlcNAc...) asparagine glycans are attached at residues Asn1064 and Asn1141. His1155 provides a ligand contact to Zn(2+). The Proton donor/acceptor role is filled by Glu1229. The segment at 1279-1329 (NIKGDDNINGDDNIKGGDNIKGDDNIKRDDNFQRDDNFQRDDNFQRGDNFH) is disordered. Residues 1368 to 1388 (LLFMTGVSFGICLFKFINFLS) traverse the membrane as a helical segment. Topologically, residues 1389-1620 (YHKSSICRRT…SKRKKVIVIL (232 aa)) are cytoplasmic. The tract at residues 1560-1620 (PNGKYKGPGF…SKRKKVIVIL (61 aa)) is disordered. Residues 1581-1597 (NKNESKTEKKSKTENKS) show a composition bias toward basic and acidic residues. Over residues 1598 to 1620 (KSKSKNKSKSKNKSKRKKVIVIL) the composition is skewed to basic residues.

This sequence belongs to the peptidase M14 family. Zn(2+) serves as cofactor.

Its subcellular location is the membrane. The sequence is that of Putative zinc carboxypeptidase from Plasmodium falciparum (isolate 3D7).